Here is a 307-residue protein sequence, read N- to C-terminus: Aquaporin Lacbi1:387054 (307 aa).

At 1-40 the chain is on the cytoplasmic side; the sequence is MSNAPLVHLSDLQKRLRVFAVWEKVRNDGKVHWAIECFAE. A helical membrane pass occupies residues 41–61; the sequence is MFGVFLYVYFGLGSTAGWVIG. Residues 62–68 lie on the Extracellular side of the membrane; sequence NIIKETN. The chain crosses the membrane as a helical span at residues 69-89; the sequence is LSSILQIGLAYAFGIWFAIGL. Over 90 to 120 the chain is Cytoplasmic; the sequence is CSSSSGGHFNPCVTLSFVVFKGFPKLKACRY. The NPA 1 motif lies at 99 to 101; it reads NPC. The chain crosses the membrane as a helical span at residues 121–141; sequence IIAQILGAYIASALVYSQWNV. The Extracellular portion of the chain corresponds to 142 to 157; that stretch reads LIEECTLGLIKAKAYD. Residues 158–178 traverse the membrane as a helical segment; it reads TTMFTPNGPAGIFALYLVPGA. An NPA 2 motif is present at residues 167-169; that stretch reads AGI. At 179-183 the chain is on the cytoplasmic side; it reads QSVPR. A helical membrane pass occupies residues 184–203; that stretch reads ALLNEFVNSTLIGMIIWAAL. The Extracellular portion of the chain corresponds to 204 to 216; it reads DPTNMMVPPAMGP. Residues 217–237 traverse the membrane as a helical segment; sequence LFISLAYAAVIWGFATPAVAL. The Cytoplasmic segment spans residues 238–264; it reads NTARDLGARLFAMSIWGTKAAGSGYSA. Residues 265–285 form a helical membrane-spanning segment; sequence IACLINIPATLLGVFLYEVFF. Residues 286–307 lie on the Extracellular side of the membrane; it reads TDSDRGKLLPILNGKKLKHIFS.

Belongs to the MIP/aquaporin (TC 1.A.8) family.

The protein localises to the membrane. The enzyme catalyses H2O(in) = H2O(out). It carries out the reaction NH4(+)(in) = NH4(+)(out). It catalyses the reaction urea(in) = urea(out). The catalysed reaction is glycerol(in) = glycerol(out). Functionally, water channel required to facilitate the transport of water across membranes. In addition to water, also shows strong ammonium transport activity. Also enables low but statistically significant glycerol and urea permeability. May be involved in fungal nitrogen (ammonium) support of the plant host in symbiosis. The sequence is that of Aquaporin Lacbi1:387054 from Laccaria bicolor (strain S238N-H82 / ATCC MYA-4686) (Bicoloured deceiver).